Here is a 405-residue protein sequence, read N- to C-terminus: MADVNKVVLAYSGGLDTSVILKWLQDTYNCEVVTFTADLGQGEEVEPARAKAQAMGVKEIYIDDLREEFVRDFVFPMFRANTVYEGEYLLGTSIARPLIAKRLIEIANETGADAISHGATGKGNDQVRFELGAYALKPGVKVIAPWREWDLLSREKLMDYAEKHNIPIERHGKKKSPYSMDANLLHISYEGGVLEDTWTEHEEDMWRWTKSPEDAPNVATYLELTYRNGDIVALDGVEMTPATVLATLNRIGGENGIGRLDIVENRYVGMKSRGCYETPGGTIMLRAHRAIESITLDREVAHLKDELMAKYASLIYTGYWWSPERLMLQQMIDASQVHVNGVVRLKLYKGNVIVTGRKSDDSLFDANIATFEDDAGAYDQADAAGFIKLNALRMRIAANKGRKLF.

ATP contacts are provided by residues 10 to 18 (AYSGGLDTS) and alanine 37. L-citrulline contacts are provided by tyrosine 88 and serine 93. An ATP-binding site is contributed by glycine 118. L-aspartate contacts are provided by threonine 120, asparagine 124, and aspartate 125. Residue asparagine 124 participates in L-citrulline binding. Arginine 128, serine 179, serine 188, glutamate 264, and tyrosine 276 together coordinate L-citrulline.

Belongs to the argininosuccinate synthase family. Type 1 subfamily. As to quaternary structure, homotetramer.

The protein localises to the cytoplasm. The catalysed reaction is L-citrulline + L-aspartate + ATP = 2-(N(omega)-L-arginino)succinate + AMP + diphosphate + H(+). It functions in the pathway amino-acid biosynthesis; L-arginine biosynthesis; L-arginine from L-ornithine and carbamoyl phosphate: step 2/3. The polypeptide is Argininosuccinate synthase (Pseudomonas syringae pv. syringae (strain B728a)).